Consider the following 116-residue polypeptide: Hydrogenase maturation factor HypA (116 aa).

A Ni(2+)-binding site is contributed by His2. The Zn(2+) site is built by Cys73, Cys76, Cys90, and Cys93.

This sequence belongs to the HypA/HybF family.

Involved in the maturation of [NiFe] hydrogenases. Required for nickel insertion into the metal center of the hydrogenase. The sequence is that of Hydrogenase maturation factor HypA from Escherichia coli O157:H7.